Here is a 277-residue protein sequence, read N- to C-terminus: Large ribosomal subunit protein uL2 (277 aa).

A disordered region spans residues 222 to 277 (GVAMNPVDHPHGGGEGRTSGGRHPVTPWGKPTKGKKTRSNKATDKFIMRSRHQRKK).

This sequence belongs to the universal ribosomal protein uL2 family. As to quaternary structure, part of the 50S ribosomal subunit. Forms a bridge to the 30S subunit in the 70S ribosome.

Its function is as follows. One of the primary rRNA binding proteins. Required for association of the 30S and 50S subunits to form the 70S ribosome, for tRNA binding and peptide bond formation. It has been suggested to have peptidyltransferase activity; this is somewhat controversial. Makes several contacts with the 16S rRNA in the 70S ribosome. The sequence is that of Large ribosomal subunit protein uL2 from Brucella ovis (strain ATCC 25840 / 63/290 / NCTC 10512).